We begin with the raw amino-acid sequence, 337 residues long: Cytidine deaminase 2 (337 aa).

CMP/dCMP-type deaminase domains lie at 43-164 (TDPI…FSSL) and 199-320 (LDCS…LKYL). Position 84-86 (84-86 (NVD)) interacts with substrate. Residue His97 participates in Zn(2+) binding. The active-site Proton donor is Glu99. Residues Cys132 and Cys135 each contribute to the Zn(2+) site.

Belongs to the cytidine and deoxycytidylate deaminase family. As to quaternary structure, homodimer. The cofactor is Zn(2+).

It carries out the reaction cytidine + H2O + H(+) = uridine + NH4(+). It catalyses the reaction 2'-deoxycytidine + H2O + H(+) = 2'-deoxyuridine + NH4(+). In terms of biological role, this enzyme scavenges exogenous and endogenous cytidine and 2'-deoxycytidine for UMP synthesis. The protein is Cytidine deaminase 2 (CDA2) of Arabidopsis thaliana (Mouse-ear cress).